The following is a 139-amino-acid chain: Putative pre-16S rRNA nuclease (139 aa).

This sequence belongs to the YqgF nuclease family.

Its subcellular location is the cytoplasm. Could be a nuclease involved in processing of the 5'-end of pre-16S rRNA. This is Putative pre-16S rRNA nuclease from Streptococcus pyogenes serotype M49 (strain NZ131).